Reading from the N-terminus, the 303-residue chain is Quinolinate synthase (303 aa).

Residues His-24 and Ser-41 each contribute to the iminosuccinate site. Cys-86 serves as a coordination point for [4Fe-4S] cluster. Iminosuccinate contacts are provided by residues 112–114 (YIN) and Ser-129. Cys-172 is a binding site for [4Fe-4S] cluster. Residues 198–200 (HPE) and Thr-215 each bind iminosuccinate. Cys-260 is a binding site for [4Fe-4S] cluster.

Belongs to the quinolinate synthase family. Type 2 subfamily. [4Fe-4S] cluster serves as cofactor.

Its subcellular location is the cytoplasm. The catalysed reaction is iminosuccinate + dihydroxyacetone phosphate = quinolinate + phosphate + 2 H2O + H(+). The protein operates within cofactor biosynthesis; NAD(+) biosynthesis; quinolinate from iminoaspartate: step 1/1. Catalyzes the condensation of iminoaspartate with dihydroxyacetone phosphate to form quinolinate. The chain is Quinolinate synthase from Caldicellulosiruptor bescii (strain ATCC BAA-1888 / DSM 6725 / KCTC 15123 / Z-1320) (Anaerocellum thermophilum).